We begin with the raw amino-acid sequence, 255 residues long: Thiazole synthase (255 aa).

The active-site Schiff-base intermediate with DXP is the Lys-96. 1-deoxy-D-xylulose 5-phosphate-binding positions include Gly-157, 183–184 (AG), and 205–206 (NS).

The protein belongs to the ThiG family. As to quaternary structure, homotetramer. Forms heterodimers with either ThiH or ThiS.

The protein resides in the cytoplasm. It carries out the reaction [ThiS sulfur-carrier protein]-C-terminal-Gly-aminoethanethioate + 2-iminoacetate + 1-deoxy-D-xylulose 5-phosphate = [ThiS sulfur-carrier protein]-C-terminal Gly-Gly + 2-[(2R,5Z)-2-carboxy-4-methylthiazol-5(2H)-ylidene]ethyl phosphate + 2 H2O + H(+). It functions in the pathway cofactor biosynthesis; thiamine diphosphate biosynthesis. In terms of biological role, catalyzes the rearrangement of 1-deoxy-D-xylulose 5-phosphate (DXP) to produce the thiazole phosphate moiety of thiamine. Sulfur is provided by the thiocarboxylate moiety of the carrier protein ThiS. In vitro, sulfur can be provided by H(2)S. This Exiguobacterium sibiricum (strain DSM 17290 / CCUG 55495 / CIP 109462 / JCM 13490 / 255-15) protein is Thiazole synthase.